A 187-amino-acid chain; its full sequence is Ribosome-recycling factor (187 aa).

Belongs to the RRF family.

The protein localises to the cytoplasm. Functionally, responsible for the release of ribosomes from messenger RNA at the termination of protein biosynthesis. May increase the efficiency of translation by recycling ribosomes from one round of translation to another. The sequence is that of Ribosome-recycling factor from Orientia tsutsugamushi (strain Ikeda) (Rickettsia tsutsugamushi).